The primary structure comprises 204 residues: Dephospho-CoA kinase (204 aa).

Residues 3–204 (VIGLTGGIGS…DRLDLAYRAH (202 aa)) form the DPCK domain. 11–16 (GSGKSY) provides a ligand contact to ATP.

It belongs to the CoaE family.

Its subcellular location is the cytoplasm. It carries out the reaction 3'-dephospho-CoA + ATP = ADP + CoA + H(+). The protein operates within cofactor biosynthesis; coenzyme A biosynthesis; CoA from (R)-pantothenate: step 5/5. In terms of biological role, catalyzes the phosphorylation of the 3'-hydroxyl group of dephosphocoenzyme A to form coenzyme A. The protein is Dephospho-CoA kinase of Ralstonia nicotianae (strain ATCC BAA-1114 / GMI1000) (Ralstonia solanacearum).